We begin with the raw amino-acid sequence, 141 residues long: Hemoglobin subunit alpha (141 aa).

The region spanning 1-141 (VLSEADKSNV…VSTVLTSKYR (141 aa)) is the Globin domain. His-58 serves as a coordination point for O2. Position 87 (His-87) interacts with heme b.

This sequence belongs to the globin family. In terms of assembly, heterotetramer of two alpha chains and two beta chains. When oxygenated in vitro, exists virtually only in polymeric form. When deoxygenated, forms tetramers, octamers and larger polymers. As to expression, red blood cells.

Its function is as follows. Involved in oxygen transport from the lung to the various peripheral tissues. The polypeptide is Hemoglobin subunit alpha (Paleosuchus palpebrosus (Cuvier's smooth-fronted caiman)).